A 387-amino-acid polypeptide reads, in one-letter code: Large ribosomal subunit protein uL3 (387 aa).

It belongs to the universal ribosomal protein uL3 family.

It is found in the cytoplasm. This Kluyveromyces lactis (strain ATCC 8585 / CBS 2359 / DSM 70799 / NBRC 1267 / NRRL Y-1140 / WM37) (Yeast) protein is Large ribosomal subunit protein uL3 (RPL3).